The chain runs to 154 residues: Small ribosomal subunit protein uS9 (154 aa).

Disordered stretches follow at residues 1–33 and 115–154; these read MVPP…SGLG and PENN…YSKR. The segment covering 135–154 has biased composition (basic residues); that stretch reads KERKKAGLKKARKAPQYSKR.

Belongs to the universal ribosomal protein uS9 family.

This is Small ribosomal subunit protein uS9 from Tropheryma whipplei (strain TW08/27) (Whipple's bacillus).